We begin with the raw amino-acid sequence, 568 residues long: Proline--tRNA ligase (568 aa).

This sequence belongs to the class-II aminoacyl-tRNA synthetase family. ProS type 1 subfamily. In terms of assembly, homodimer.

Its subcellular location is the cytoplasm. It carries out the reaction tRNA(Pro) + L-proline + ATP = L-prolyl-tRNA(Pro) + AMP + diphosphate. Functionally, catalyzes the attachment of proline to tRNA(Pro) in a two-step reaction: proline is first activated by ATP to form Pro-AMP and then transferred to the acceptor end of tRNA(Pro). As ProRS can inadvertently accommodate and process non-cognate amino acids such as alanine and cysteine, to avoid such errors it has two additional distinct editing activities against alanine. One activity is designated as 'pretransfer' editing and involves the tRNA(Pro)-independent hydrolysis of activated Ala-AMP. The other activity is designated 'posttransfer' editing and involves deacylation of mischarged Ala-tRNA(Pro). The misacylated Cys-tRNA(Pro) is not edited by ProRS. The polypeptide is Proline--tRNA ligase (Alkalilimnicola ehrlichii (strain ATCC BAA-1101 / DSM 17681 / MLHE-1)).